The following is a 487-amino-acid chain: Sorting nexin-4 (487 aa).

The segment at 1–59 (MDHDDFDSVSWRHGPDSDISRPTTSGTDTAESPETRRDPNGKRRMSSASEIPQAGPHAD) is disordered. Residues 20-32 (SRPTTSGTDTAES) show a composition bias toward polar residues. The region spanning 70–192 (VLECRVDTPI…IFLESPDWNA (123 aa)) is the PX domain. A 1,2-diacyl-sn-glycero-3-phospho-(1D-myo-inositol-3-phosphate)-binding residues include Arg-113, Thr-115, Lys-139, and Arg-158. Positions 395–430 (EQSRRERMRKLELRIDELTREVESAKTTSEMFDEEV) form a coiled coil.

It belongs to the sorting nexin family.

Its subcellular location is the cytoplasm. It localises to the cytosol. The protein localises to the preautophagosomal structure membrane. It is found in the endosome membrane. In terms of biological role, sorting nexin, involved in the separation or division of vacuoles throughout the entire life cycle of the cells. Involved in retrieval of late-Golgi SNAREs from post-Golgi endosomes to the trans-Golgi network, for cytoplasm to vacuole transport (Cvt), and autophagy of large cargos including mitophagy, pexophagy and glycophagy. The polypeptide is Sorting nexin-4 (snx4) (Emericella nidulans (strain FGSC A4 / ATCC 38163 / CBS 112.46 / NRRL 194 / M139) (Aspergillus nidulans)).